Here is a 265-residue protein sequence, read N- to C-terminus: Mlc titration factor A (265 aa).

His111, His148, His152, and Glu211 together coordinate Zn(2+).

Belongs to the MtfA family. As to quaternary structure, monomer in solution. Interacts with Mlc. The cofactor is Zn(2+).

The protein resides in the cytoplasm. With respect to regulation, association between Mlc and MtfA may induce structural changes that activate the peptidase activity of MtfA while inactivating the DNA-binding ability of Mlc. The aminopeptidase activity is partially inhibited by metal chelators such as EDTA and phenantroline, but not by inhibitors for serine-, aspartyl-, or cysteine-proteases. Involved in the modulation of the activity of the glucose-phosphotransferase system (glucose-PTS). Interacts with the transcriptional repressor Mlc, preventing its interaction with DNA and leading to the modulation of expression of genes regulated by Mlc, including ptsG, which encodes the PTS system glucose-specific EIICB component. Its function is as follows. Shows zinc-dependent metallopeptidase activity. In vitro, can cleave several artificial substrates. The highest activity is observed for L-alanine fused to 4-nitroanilide (L-alanine-pNA). Shows lower activity towards proline-pNA and valine-pNA. This Klebsiella pneumoniae subsp. pneumoniae (strain ATCC 700721 / MGH 78578) protein is Mlc titration factor A.